We begin with the raw amino-acid sequence, 218 residues long: Oxidative stress regulator AosR (218 aa).

A CXXXC motif is present at residues 5-9 (CGRRC). Residues cysteine 5 and cysteine 9 are joined by a disulfide bond.

This sequence belongs to the AosR family. In terms of assembly, homodimer. Under oxidative stress, interacts with the extracytoplasmic-function (ECF) RNA polymerase sigma factor SigH.

Its activity is regulated as follows. Activity is modulated by the formation of a disulfide bound within the N-terminal Cys-X-X-X-Cys (CXXXC) motif. This intramolecular disulfide bond is formed in response to oxidative stress, and results in oxidative stress-dependent interaction with the sigma factor SigH. In terms of biological role, transcription factor crucial for intra-mycobacterial redox homeostasis and protection against host-derived oxidative and nitrosative radicals. In response to oxidative stress, interacts with the ECF sigma factor SigH and, in conjunction with SigH, binds to an auxiliary promoter upstream of mec-cysO-cysM, leading to the transcriptional activation of these genes encoding a non-canonical actinomycete-specific cysteine biosynthesis pathway. Increased transcription of mec-cysO-cysM results in enhanced production of L-cysteine and cysteine-derived antioxidant molecules. Increased production of cysteine protects mycobacteria cells from host phagocyte-derived oxidative and nitrosative stress, thus facilitating the mycobacterial growth in the host. This chain is Oxidative stress regulator AosR, found in Mycobacterium bovis (strain ATCC BAA-935 / AF2122/97).